A 627-amino-acid chain; its full sequence is uncharacterized protein (627 aa).

2 disordered regions span residues 141-187 and 490-510; these read LRYP…TPPS and ENENTNGSANNSTYTNGGPRT. Positions 491–510 are enriched in polar residues; the sequence is NENTNGSANNSTYTNGGPRT. At Ser-559 the chain carries Phosphoserine.

This is an uncharacterized protein from Saccharomyces cerevisiae (strain ATCC 204508 / S288c) (Baker's yeast).